A 303-amino-acid chain; its full sequence is Type II methyltransferase M.MjaI (303 aa).

This sequence belongs to the N(4)/N(6)-methyltransferase family. N(4) subfamily.

It catalyses the reaction a 2'-deoxycytidine in DNA + S-adenosyl-L-methionine = an N(4)-methyl-2'-deoxycytidine in DNA + S-adenosyl-L-homocysteine + H(+). A beta subtype methylase that recognizes the double-stranded sequence 5'-CTAG-3', methylates C-1 on both strands, and protects the DNA from cleavage by the MjaI endonuclease. In Methanocaldococcus jannaschii (strain ATCC 43067 / DSM 2661 / JAL-1 / JCM 10045 / NBRC 100440) (Methanococcus jannaschii), this protein is Type II methyltransferase M.MjaI (mjaIM).